The chain runs to 115 residues: Large ribosomal subunit protein bL20c (115 aa).

The protein belongs to the bacterial ribosomal protein bL20 family.

It localises to the plastid. Its subcellular location is the chloroplast. Its function is as follows. Binds directly to 23S ribosomal RNA and is necessary for the in vitro assembly process of the 50S ribosomal subunit. It is not involved in the protein synthesizing functions of that subunit. This is Large ribosomal subunit protein bL20c from Emiliania huxleyi (Coccolithophore).